The following is a 1416-amino-acid chain: Uveal autoantigen with coiled-coil domains and ankyrin repeats (1416 aa).

Met-1 carries the N-acetylmethionine modification. The interval 1–24 (MKSLKSRLRRQDVPGPASSGAAAA) is disordered. ANK repeat units follow at residues 38 to 66 (LMKA…KLDV), 67 to 96 (EGRS…DITT), 100 to 129 (AGRN…PTEH), 133 to 162 (QGRT…SVNA), 166 to 195 (DGRT…DVNS), and 199 to 228 (QNRT…DISL). Coiled-coil stretches lie at residues 286–374 (VKSH…NRFK) and 438–1386 (ENEI…IYRT). Lys-1035 is covalently cross-linked (Glycyl lysine isopeptide (Lys-Gly) (interchain with G-Cter in SUMO2)).

Component of the apoptosome complex, composed of APAF1, pro-caspase-9 and UACA. In the complex, it probably interacts directly with APAF1. Interacts with LGALS3, ARF6 and ACTB. Interacts with RAB39A. As to expression, highly expressed in skeletal muscle, heart, kidney and pancreas. Expressed in choroid, retina and epidermal melanocytes. Expressed in eye muscles and thyroid follicular cells.

It is found in the nucleus. The protein resides in the cytoplasm. It localises to the cytoskeleton. Regulates APAF1 expression and plays an important role in the regulation of stress-induced apoptosis. Promotes apoptosis by regulating three pathways, apoptosome up-regulation, LGALS3/galectin-3 down-regulation and NF-kappa-B inactivation. Regulates the redistribution of APAF1 into the nucleus after proapoptotic stress. Down-regulates the expression of LGALS3 by inhibiting NFKB1. In terms of biological role, modulates isoactin dynamics to regulate the morphological alterations required for cell growth and motility. Interaction with ARF6 may modulate cell shape and motility after injury. May be involved in multiple neurite formation. This chain is Uveal autoantigen with coiled-coil domains and ankyrin repeats (UACA), found in Homo sapiens (Human).